A 151-amino-acid chain; its full sequence is UPF0208 membrane protein YfbV (151 aa).

2 helical membrane passes run F46–L65 and L69–G91.

It belongs to the UPF0208 family.

It localises to the cell inner membrane. This Photorhabdus temperata protein is UPF0208 membrane protein YfbV (yfbV).